Here is a 349-residue protein sequence, read N- to C-terminus: 6-phosphogluconolactonase (349 aa).

A disordered region spans residues 125 to 151 (LQSPVSEAAHTGKGPHERQEKPHTHYA). Positions 138-147 (GPHERQEKPH) are enriched in basic and acidic residues.

The protein belongs to the cycloisomerase 2 family.

The enzyme catalyses 6-phospho-D-glucono-1,5-lactone + H2O = 6-phospho-D-gluconate + H(+). It participates in carbohydrate degradation; pentose phosphate pathway; D-ribulose 5-phosphate from D-glucose 6-phosphate (oxidative stage): step 2/3. Its function is as follows. Catalyzes the hydrolysis of 6-phosphogluconolactone to 6-phosphogluconate. This chain is 6-phosphogluconolactonase (pgl), found in Bacillus subtilis (strain 168).